The following is a 413-amino-acid chain: Alpha-1-antitrypsin-like protein CM55-SI (413 aa).

The first 24 residues, 1–24, serve as a signal peptide directing secretion; it reads MPSSISWGLLLLAALSCLGPGSLA. Glutamine 25 is subject to Pyrrolidone carboxylic acid. N-linked (GlcNAc...) asparagine glycosylation is found at asparagine 65, asparagine 102, asparagine 165, and asparagine 266. The interval 368–387 is RCL; it reads GGTVLGNIRSILRYEVIFDR.

Belongs to the serpin family. As to expression, expressed in liver.

This Tamias sibiricus (Siberian chipmunk) protein is Alpha-1-antitrypsin-like protein CM55-SI.